Consider the following 539-residue polypeptide: Chaperonin GroEL (539 aa).

ATP is bound by residues 29 to 32 (TLGP), 86 to 90 (DGTTT), G413, and D492.

It belongs to the chaperonin (HSP60) family. In terms of assembly, forms a cylinder of 14 subunits composed of two heptameric rings stacked back-to-back. Interacts with the co-chaperonin GroES.

The protein resides in the cytoplasm. The enzyme catalyses ATP + H2O + a folded polypeptide = ADP + phosphate + an unfolded polypeptide.. Together with its co-chaperonin GroES, plays an essential role in assisting protein folding. The GroEL-GroES system forms a nano-cage that allows encapsulation of the non-native substrate proteins and provides a physical environment optimized to promote and accelerate protein folding. The sequence is that of Chaperonin GroEL from Fusobacterium nucleatum subsp. nucleatum (strain ATCC 25586 / DSM 15643 / BCRC 10681 / CIP 101130 / JCM 8532 / KCTC 2640 / LMG 13131 / VPI 4355).